The following is a 156-amino-acid chain: Small ribosomal subunit protein uS7 (156 aa).

It belongs to the universal ribosomal protein uS7 family. As to quaternary structure, part of the 30S ribosomal subunit. Contacts proteins S9 and S11.

Functionally, one of the primary rRNA binding proteins, it binds directly to 16S rRNA where it nucleates assembly of the head domain of the 30S subunit. Is located at the subunit interface close to the decoding center, probably blocks exit of the E-site tRNA. The protein is Small ribosomal subunit protein uS7 of Methylibium petroleiphilum (strain ATCC BAA-1232 / LMG 22953 / PM1).